Here is a 185-residue protein sequence, read N- to C-terminus: Dual-action ribosomal maturation protein DarP (185 aa).

This sequence belongs to the DarP family.

The protein resides in the cytoplasm. Its function is as follows. Member of a network of 50S ribosomal subunit biogenesis factors which assembles along the 30S-50S interface, preventing incorrect 23S rRNA structures from forming. Promotes peptidyl transferase center (PTC) maturation. The sequence is that of Dual-action ribosomal maturation protein DarP from Vibrio vulnificus (strain YJ016).